We begin with the raw amino-acid sequence, 339 residues long: DNA-directed RNA polymerase subunit alpha (339 aa).

Residues M1 to E233 form an alpha N-terminal domain (alpha-NTD) region. Residues G266–F339 are alpha C-terminal domain (alpha-CTD).

Belongs to the RNA polymerase alpha chain family. In terms of assembly, in plastids the minimal PEP RNA polymerase catalytic core is composed of four subunits: alpha, beta, beta', and beta''. When a (nuclear-encoded) sigma factor is associated with the core the holoenzyme is formed, which can initiate transcription.

It localises to the plastid. The protein resides in the chloroplast. It carries out the reaction RNA(n) + a ribonucleoside 5'-triphosphate = RNA(n+1) + diphosphate. In terms of biological role, DNA-dependent RNA polymerase catalyzes the transcription of DNA into RNA using the four ribonucleoside triphosphates as substrates. This chain is DNA-directed RNA polymerase subunit alpha, found in Elymus canadensis (Canada wild rye).